A 189-amino-acid chain; its full sequence is Imidazoleglycerol-phosphate dehydratase (189 aa).

This sequence belongs to the imidazoleglycerol-phosphate dehydratase family.

The protein resides in the cytoplasm. The catalysed reaction is D-erythro-1-(imidazol-4-yl)glycerol 3-phosphate = 3-(imidazol-4-yl)-2-oxopropyl phosphate + H2O. The protein operates within amino-acid biosynthesis; L-histidine biosynthesis; L-histidine from 5-phospho-alpha-D-ribose 1-diphosphate: step 6/9. The sequence is that of Imidazoleglycerol-phosphate dehydratase from Nautilia profundicola (strain ATCC BAA-1463 / DSM 18972 / AmH).